A 220-amino-acid polypeptide reads, in one-letter code: Zinc-finger homeodomain protein 2 (220 aa).

Residues 1–11 (MNFEDQEEDME) are compositionally biased toward acidic residues. The tract at residues 1–40 (MNFEDQEEDMEMSGVNPPCGYDSLSGEGATSSGGGGVGRS) is disordered. Gly residues predominate over residues 31 to 40 (SSGGGGVGRS). A ZF-HD dimerization-type zinc finger spans residues 49–98 (YRECLKNHAVNIGGHAVDGCCEFMPSGEDGTLDALKCAACGCHRNFHRKE). The interval 100–160 (ESIGGRAHRV…SSSGGTTKRF (61 aa)) is disordered. Residues 157-220 (TKRFRTKFTA…NNKNSLGKKP (64 aa)) constitute a DNA-binding region (homeobox; atypical).

Homo or heterodimer. Interacts with ZHD1, ZHD3, ZHD4, ZHD5, ZHD6, ZHD7, ZHD8, ZHD9, ZHD10 and ZHD11. Mostly expressed in flowers and, to a lower extent, in inflorescence, stems and leaves.

Its subcellular location is the nucleus. Functionally, essential protein. Putative transcription factor. The protein is Zinc-finger homeodomain protein 2 (ZHD1) of Arabidopsis thaliana (Mouse-ear cress).